We begin with the raw amino-acid sequence, 324 residues long: Lipid droplet-associated hydrolase (324 aa).

Ser-136 (nucleophile) is an active-site residue. Residues Asp-270 and His-299 each act as charge relay system in the active site.

Belongs to the AB hydrolase superfamily. LDAH family.

The protein localises to the lipid droplet. It is found in the endoplasmic reticulum. The catalysed reaction is a cholesterol ester + H2O = cholesterol + a fatty acid + H(+). Functionally, probable serine lipid hydrolase associated with lipid droplets. Has low cholesterol esterase activity. Appears to lack triglyceride lipase activity. Involved in cholesterol and triglyceride homeostasis; stimulates cellular triglyceride accumulation and cellular cholesterol release. The sequence is that of Lipid droplet-associated hydrolase from Gallus gallus (Chicken).